Consider the following 544-residue polypeptide: E3 ubiquitin-protein ligase makorin-3 (544 aa).

Disordered stretches follow at residues 1–46 and 117–144; these read MEES…VSSA and DLSG…KMAT. 2 stretches are compositionally biased toward low complexity: residues 9-19 and 36-46; these read EAHAAAGAEAG and AAGASAGVSSA. 2 consecutive C3H1-type zinc fingers follow at residues 92-119 and 274-301; these read WTKQ…HDLS and PMPL…HGEI. Residues 302–329 form a makorin-type Cys-His region; that stretch reads CDMCGQQALHPWDAAQQEAHRRACVEAH. The segment at 347-401 adopts an RING-type zinc-finger fold; that stretch reads CGICMEVVYEKADPSDRRFGILFSCNHTYCLRCIRRWRSATQFENRISKSCPQCR. Residues 430–459 form a C3H1-type 3 zinc finger; the sequence is GMSQKACRYFAGGLGHCPFGEFCFYKHEYP.

In terms of tissue distribution, mainly expressed in mouse brain and reproductive system including testis and ovary. Ubiquitously detected at low levels throughout the entire embryo, but expression is highest in the ventricular layers of the brain.

It is found in the nucleus. It carries out the reaction S-ubiquitinyl-[E2 ubiquitin-conjugating enzyme]-L-cysteine + [acceptor protein]-L-lysine = [E2 ubiquitin-conjugating enzyme]-L-cysteine + N(6)-ubiquitinyl-[acceptor protein]-L-lysine.. It functions in the pathway protein modification; protein ubiquitination. Functionally, E3 ubiquitin ligase catalyzing the covalent attachment of ubiquitin moieties onto substrate proteins. Acts as a key developmental timer that helps ensure puberty begins at the appropriate age, by inhibiting premature activation of the reproductive hormone cascade. Epigenetically regulates GNRH1 transcription by disrupting the binding of methyl-DNA binding protein 3/MBD3 to the promoter of GNRH1. Mechanistically, mediates the non-proteolytic ubiquitination of MBD3 at multiple sites with 'Lys27' ubiquitin linkages and thereby regulates the methylation status of the genome, including GNRH1 promoter. Modulates the stability and translation of GNRH1 mRNA by mediating the non-proteolytic ubiquitination of PABP family members PABPC1, PABPC3 and PABPC4 at multiple sites. Also participates in the maintenance of genomic and epigenomic stability by regulating the abundance of APEX2 via 'Lys-48'-linked ubiquitination. The sequence is that of E3 ubiquitin-protein ligase makorin-3 (Mkrn3) from Mus musculus (Mouse).